Consider the following 115-residue polypeptide: Large ribosomal subunit protein bL20 (115 aa).

The protein belongs to the bacterial ribosomal protein bL20 family.

In terms of biological role, binds directly to 23S ribosomal RNA and is necessary for the in vitro assembly process of the 50S ribosomal subunit. It is not involved in the protein synthesizing functions of that subunit. The sequence is that of Large ribosomal subunit protein bL20 from Microcystis aeruginosa (strain NIES-843 / IAM M-2473).